A 230-amino-acid polypeptide reads, in one-letter code: Uracil-DNA glycosylase (230 aa).

The active-site Proton acceptor is Asp70.

This sequence belongs to the uracil-DNA glycosylase (UDG) superfamily. UNG family.

Its subcellular location is the cytoplasm. The catalysed reaction is Hydrolyzes single-stranded DNA or mismatched double-stranded DNA and polynucleotides, releasing free uracil.. Its function is as follows. Excises uracil residues from the DNA which can arise as a result of misincorporation of dUMP residues by DNA polymerase or due to deamination of cytosine. The polypeptide is Uracil-DNA glycosylase (Pseudomonas entomophila (strain L48)).